Reading from the N-terminus, the 1118-residue chain is Sodium-driven chloride bicarbonate exchanger (1118 aa).

Disordered stretches follow at residues Met-1 to Val-23, Gly-58 to Ser-96, Lys-245 to Gln-312, and Asn-457 to Leu-476. The Cytoplasmic segment spans residues Met-1–Cys-509. Residues Arg-59–Asp-76 are compositionally biased toward basic residues. Basic and acidic residues predominate over residues Arg-77 to Pro-90. Ser-89 is subject to Phosphoserine. A Phosphothreonine modification is found at Thr-94. Residues Glu-248–Ser-264 are compositionally biased toward polar residues. Ser-276 bears the Phosphoserine mark. Residues Leu-510–Leu-530 form a helical membrane-spanning segment. Residues Leu-531–Arg-538 lie on the Extracellular side of the membrane. Residues Ile-539–Gly-559 form a helical membrane-spanning segment. Residues Gly-560–Pro-562 lie on the Cytoplasmic side of the membrane. The chain crosses the membrane as a helical span at residues Leu-563 to Cys-583. Over Lys-584–Ser-596 the chain is Extracellular. The chain crosses the membrane as a helical span at residues Ile-597–Val-617. Residues Cys-618–Glu-626 are Cytoplasmic-facing. A helical membrane pass occupies residues Ala-627 to Leu-647. Topologically, residues Ser-648–Pro-720 are extracellular. 4 N-linked (GlcNAc...) asparagine glycosylation sites follow: Asn-674, Asn-677, Asn-687, and Asn-697. The helical transmembrane segment at Tyr-721–Ala-741 threads the bilayer. The Cytoplasmic portion of the chain corresponds to Thr-742–Asp-762. Residues Phe-763–Ser-783 form a helical membrane-spanning segment. The Extracellular portion of the chain corresponds to Pro-784–Asn-809. The chain crosses the membrane as a helical span at residues Pro-810–Met-830. At Asp-831 to Asp-855 the chain is on the cytoplasmic side. Residues Leu-856–Ala-876 traverse the membrane as a helical segment. The Extracellular portion of the chain corresponds to Ala-877 to Thr-912. Residues Gly-913–Ile-933 traverse the membrane as a helical segment. At Pro-934 to Met-935 the chain is on the cytoplasmic side. The helical transmembrane segment at Pro-936–Phe-956 threads the bilayer. Residues Asp-957–Trp-998 are Extracellular-facing. The chain crosses the membrane as a helical span at residues Ile-999 to Val-1019. Residues Arg-1020–Ser-1118 lie on the Cytoplasmic side of the membrane. Phosphoserine is present on residues Ser-1057 and Ser-1085.

This sequence belongs to the anion exchanger (TC 2.A.31) family. As to expression, predominantly expressed in the brain.

The protein localises to the basolateral cell membrane. Its subcellular location is the apical cell membrane. It localises to the cell projection. It is found in the dendrite. The protein resides in the axon. The protein localises to the perikaryon. Its subcellular location is the presynapse. It localises to the postsynapse. It carries out the reaction 2 hydrogencarbonate(out) + chloride(in) + Na(+)(out) = 2 hydrogencarbonate(in) + chloride(out) + Na(+)(in). In terms of biological role, sodium/bicarbonate cotransporter which plays an important role in regulating intracellular pH. Has been shown to act as a sodium/bicarbonate cotransporter in exchange for intracellular chloride. Has also been shown to act as a sodium/biocarbonate cotransporter which does not couple net influx of bicarbonate to net efflux of chloride, with the observed chloride efflux being due to chloride self-exchange. Controls neuronal pH and may contribute to the secretion of cerebrospinal fluid. Acting on presynaptic intracellular pH, it promotes GABA release, reduces the excitability of CA1 pyramidal neurons, and modulates short-term synaptic plasticity. Required in retinal cells to maintain normal pH which is necessary for normal vision. In the kidney, likely to mediate bicarbonate reclamation in the apical membrane of the proximal tubules. This Homo sapiens (Human) protein is Sodium-driven chloride bicarbonate exchanger.